Here is a 665-residue protein sequence, read N- to C-terminus: Methionine--tRNA ligase (665 aa).

The 'HIGH' region motif lies at 12–22 (YYPSGKLHIGS). A 'KMSKS' region motif is present at residues 308-312 (KMSKS). K311 is an ATP binding site. A tRNA-binding domain is found at 562–665 (TFDAVEIRVA…SSVPNGSIIG (104 aa)).

The protein belongs to the class-I aminoacyl-tRNA synthetase family. MetG type 2B subfamily. As to quaternary structure, homodimer.

The protein localises to the cytoplasm. It catalyses the reaction tRNA(Met) + L-methionine + ATP = L-methionyl-tRNA(Met) + AMP + diphosphate. In terms of biological role, is required not only for elongation of protein synthesis but also for the initiation of all mRNA translation through initiator tRNA(fMet) aminoacylation. This chain is Methionine--tRNA ligase (metG), found in Streptococcus pyogenes serotype M18 (strain MGAS8232).